A 683-amino-acid polypeptide reads, in one-letter code: MTLKEHKTVHEAQNAVARQAPEHFYKSQPSRGGFIKDISEYERLYKQSIEDPETFFSEKARELLHWDAPFSKVSYGSLEQGDVAWFLNGKLNASYNCVDRHAFANPDKPAIIYEADDEKDNYTITFGELLRRVSKVAGILKSWGVKKGDTVAIYLPMIPEAIIAMLAVVRLGAIHSVVFAGFSAGSLKDRVVDAGSKVVITCDEGRRGGKTVHLKKIVDEGLNGVDQVSRILVFKRTGTEGIPMKAGRDFWLHEEADKRRSYLPPVPCDAEDPLFLLYTSGSTGSPKGIVHTTGGYLLGAAMTTKYVFDVHPEDVFFTAGDVGWITGHTYALYGPLLLGVPTICFESTPAYPDYGRYWRIVERHKATHFYVAPTAMRLIKRVGEAEISKYDLSSLRVLGSVGEPISPELWEWYNEKIGNNNCVVCDTFWQTESGSHLIAPMAGAIPTKPGSTTLPFFGIDACIIDPVSGVEIEGNDVEGVLAVKSPWPSMARSVWNDHVRYVDTYMKPYPGYYFTGDGAGRDHDGYYWIRGRVDDVVNVSGHRLSTAEIEACLVNHENISETAVVGINDELTGQAVIAFVSLKEGYLQNDAPEGDAEHITPSNLRRELILQVRGEIGPFASPKCIILVRDLPKTRSGKIMRRVLRKIASNEADQLGDLSTLANADVVPAIISACENQFFAEKK.

CoA contacts are provided by residues 207 to 210 and T326; that span reads RGGK. ATP is bound by residues 402-404, 426-431, D517, and R532; these read GEP and DTFWQT. S540 is a binding site for CoA. Residue R543 coordinates ATP. Position 613 (R613) interacts with CoA.

It belongs to the ATP-dependent AMP-binding enzyme family.

The enzyme catalyses acetate + ATP + CoA = acetyl-CoA + AMP + diphosphate. This chain is Acetyl-coenzyme A synthetase 2 (ACS2), found in Candida glabrata (strain ATCC 2001 / BCRC 20586 / JCM 3761 / NBRC 0622 / NRRL Y-65 / CBS 138) (Yeast).